The following is a 220-amino-acid chain: Methylamine utilization ferredoxin-type protein MauM (220 aa).

4Fe-4S ferredoxin-type domains follow at residues 50 to 80 and 88 to 120; these read ALPE…LAEM and TPFF…RDIP. The [4Fe-4S] cluster site is built by Cys-60, Cys-63, Cys-66, Cys-70, Cys-98, Cys-101, Cys-106, Cys-110, Cys-138, Cys-146, Cys-149, Cys-153, Cys-182, Cys-185, Cys-188, and Cys-192. Positions 173-204 constitute a 4Fe-4S ferredoxin-type 3 domain; it reads VIPTVHSDKCTGCGTCEKHCVLGQAAIRVLPR.

It participates in one-carbon metabolism; methylamine degradation. Functionally, involved in electron transfer. The sequence is that of Methylamine utilization ferredoxin-type protein MauM (mauM) from Methylorubrum extorquens (strain ATCC 14718 / DSM 1338 / JCM 2805 / NCIMB 9133 / AM1) (Methylobacterium extorquens).